The following is a 434-amino-acid chain: Xylose isomerase (434 aa).

Residues histidine 99 and aspartate 102 contribute to the active site. Glutamate 230, glutamate 266, histidine 269, aspartate 294, aspartate 305, aspartate 307, and aspartate 337 together coordinate Mg(2+).

This sequence belongs to the xylose isomerase family. Homotetramer. It depends on Mg(2+) as a cofactor.

Its subcellular location is the cytoplasm. The catalysed reaction is alpha-D-xylose = alpha-D-xylulofuranose. In Dinoroseobacter shibae (strain DSM 16493 / NCIMB 14021 / DFL 12), this protein is Xylose isomerase.